The primary structure comprises 311 residues: Tricarboxylate transport protein, mitochondrial (311 aa).

The propeptide at Met-1–Ala-13 is removed in mature form. The interval Met-1–Lys-21 is disordered. Solcar repeat units follow at residues Thr-23–His-111, Arg-122–Trp-208, and Met-218–Leu-303. Helical transmembrane passes span Ile-29–Thr-46, Gly-86–Phe-105, and Leu-129–Met-143. Ser-156 carries the phosphoserine modification. 3 consecutive transmembrane segments (helical) span residues Gly-183–Met-202, Gly-224–Leu-241, and Gly-278–Tyr-297.

This sequence belongs to the mitochondrial carrier (TC 2.A.29) family. Possesses a short cleavable presequence, which, however, is found to be dispensable both for targeting to mitochondria and insertion into the inner membrane. However, the presequence is required to keep SLC25A1 in a soluble state and thus in an import-competent state. Mature SLC25A1 lacking the presequence is prone to aggregation. As to expression, expressed minimally but ubiquitously throughout the adult brain. Detected at higher levels in the olfactory bulb, neocortex and cerebellum. Also expressed in a subset of large cells in the globus pallidus.

The protein localises to the mitochondrion inner membrane. Its subcellular location is the mitochondrion membrane. The catalysed reaction is (S)-malate(in) + citrate(out) = (S)-malate(out) + citrate(in). The enzyme catalyses D-threo-isocitrate(in) + citrate(out) = D-threo-isocitrate(out) + citrate(in). It carries out the reaction citrate(out) + succinate(in) = citrate(in) + succinate(out). It catalyses the reaction cis-aconitate(in) + citrate(out) = cis-aconitate(out) + citrate(in). The catalysed reaction is trans-aconitate(in) + citrate(out) = trans-aconitate(out) + citrate(in). The enzyme catalyses phosphoenolpyruvate(in) + citrate(out) = phosphoenolpyruvate(out) + citrate(in). It carries out the reaction maleate(in) + citrate(out) = maleate(out) + citrate(in). Functionally, mitochondrial electroneutral antiporter that exports citrate from the mitochondria into the cytosol in exchange for malate. Also able to mediate the exchange of citrate for isocitrate, phosphoenolpyruvate, cis-aconitate and to a lesser extent trans-aconitate, maleate and succinate. In the cytoplasm, citrate plays important roles in fatty acid and sterol synthesis, regulation of glycolysis, protein acetylation, and other physiopathological processes. The protein is Tricarboxylate transport protein, mitochondrial of Mus musculus (Mouse).